The sequence spans 381 residues: Dual-specificity RNA methyltransferase RlmN (381 aa).

Residue E96 is the Proton acceptor of the active site. A Radical SAM core domain is found at 102–342 (TDDRGTLCVS…TRTTRGDDID (241 aa)). C109 and C345 are joined by a disulfide. C116, C120, and C123 together coordinate [4Fe-4S] cluster. Residues 170–171 (GE), S202, 224–226 (SLH), and N302 contribute to the S-adenosyl-L-methionine site. C345 acts as the S-methylcysteine intermediate in catalysis.

Belongs to the radical SAM superfamily. RlmN family. Requires [4Fe-4S] cluster as cofactor.

Its subcellular location is the cytoplasm. It carries out the reaction adenosine(2503) in 23S rRNA + 2 reduced [2Fe-2S]-[ferredoxin] + 2 S-adenosyl-L-methionine = 2-methyladenosine(2503) in 23S rRNA + 5'-deoxyadenosine + L-methionine + 2 oxidized [2Fe-2S]-[ferredoxin] + S-adenosyl-L-homocysteine. It catalyses the reaction adenosine(37) in tRNA + 2 reduced [2Fe-2S]-[ferredoxin] + 2 S-adenosyl-L-methionine = 2-methyladenosine(37) in tRNA + 5'-deoxyadenosine + L-methionine + 2 oxidized [2Fe-2S]-[ferredoxin] + S-adenosyl-L-homocysteine. Functionally, specifically methylates position 2 of adenine 2503 in 23S rRNA and position 2 of adenine 37 in tRNAs. m2A2503 modification seems to play a crucial role in the proofreading step occurring at the peptidyl transferase center and thus would serve to optimize ribosomal fidelity. In Pseudomonas putida (strain GB-1), this protein is Dual-specificity RNA methyltransferase RlmN.